A 529-amino-acid chain; its full sequence is MLMLLVRGTRYESLRSKVVLPTPLGGRGTEVLVSESPSPDTGIRWRQSDEALRVNVGGVRRLLSARALARFPGTRLGRLQAAASEEQARRLCDDYDAAAREFYFDRHPGFFLGLLHFYRTGHLHVLDELCVFAFGQEADYWGLGENVLAACCRARYLERRLTQPRAWDEDSDTPSSVDPCPDEISDVQRELARYGAARCGRLRRRLWLTMENPGYSLPSKLFSCVSISVVLASIAAMCIHSLPEYQAREAAAAVAAVAAGRSPEGVRDDPVLRRLEYFCIAWFSFEVSSRLLLAPSTRNFFCHPLNLIDIVSVLPFYLTLLAGVALGDQGGTGGKELGHLGKVVQVFRLMRIFRVLKLARHSTGLRSLGATLKHSYREVGILLLYLAVGVSVFSGVAYTAEKEEDVGFNTIPACWWWGTVSMTTVGYGDVVPVTVAGKLAASGCILGGILVVALPITIIFNKFSHFYRRQKALEAAVRNSNHQEFEDLLSSVDEVSEASLETSREISQEGRSADLETQAPSEPPHPQMY.

Over 1 to 217 (MLMLLVRGTR…LTMENPGYSL (217 aa)) the chain is Cytoplasmic. The helical transmembrane segment at 218–239 (PSKLFSCVSISVVLASIAAMCI) threads the bilayer. Residues 240 to 270 (HSLPEYQAREAAAAVAAVAAGRSPEGVRDDP) are Extracellular-facing. The chain crosses the membrane as a helical span at residues 271-293 (VLRRLEYFCIAWFSFEVSSRLLL). The Cytoplasmic portion of the chain corresponds to 294–304 (APSTRNFFCHP). Residues 305 to 322 (LNLIDIVSVLPFYLTLLA) form a helical membrane-spanning segment. The Extracellular portion of the chain corresponds to 323–340 (GVALGDQGGTGGKELGHL). A helical; Voltage-sensor transmembrane segment spans residues 341-361 (GKVVQVFRLMRIFRVLKLARH). The Cytoplasmic segment spans residues 362–376 (STGLRSLGATLKHSY). A helical transmembrane segment spans residues 377 to 398 (REVGILLLYLAVGVSVFSGVAY). At 399–411 (TAEKEEDVGFNTI) the chain is on the extracellular side. The helical intramembrane region spans 412–423 (PACWWWGTVSMT). The short motif at 424–429 (TVGYGD) is the Selectivity filter element. Residues 424–431 (TVGYGDVV) lie within the membrane without spanning it. Over 432–438 (PVTVAGK) the chain is Extracellular. A helical membrane pass occupies residues 439–467 (LAASGCILGGILVVALPITIIFNKFSHFY). Topologically, residues 468-529 (RRQKALEAAV…PSEPPHPQMY (62 aa)) are cytoplasmic. The segment at 500-529 (LETSREISQEGRSADLETQAPSEPPHPQMY) is disordered. Positions 502–514 (TSREISQEGRSAD) are enriched in basic and acidic residues.

The protein belongs to the potassium channel family. S (TC 1.A.1.2) subfamily. Kv9.1/KCNS1 sub-subfamily. As to quaternary structure, heterotetramer with KCNB1. Heterotetramer with KCNB2. Does not form homomultimers.

It localises to the cell membrane. Potassium channel regulatory subunit that modulate the delayed rectifier voltage-gated potassium channel activity of KCNB1 and KCNB2 by altering their kinetics, expression levels, and shifting the half-inactivation potential to more polarized values. While it does not form functional channels on its own, it can form functional heterotetrameric channels with KCNB1 and KCNB2. Each regulatory subunit has unique regulatory properties that can lead to extensive inhibition, significant changes in kinetics, and/or substantial shifts in the voltage dependencies of the inactivation process. This chain is Delayed-rectifier potassium channel regulatory subunit KCNS1, found in Colobus guereza (Mantled guereza).